Here is a 341-residue protein sequence, read N- to C-terminus: Ketol-acid reductoisomerase (NADP(+)) (341 aa).

A KARI N-terminal Rossmann domain is found at Met1 to Thr181. NADP(+) is bound by residues Phe24–Gln27, Ser50, Ser52, and Asp82–Gln85. Residue His107 is part of the active site. Gly133 serves as a coordination point for NADP(+). Residues Thr182 to Gly327 form the KARI C-terminal knotted domain. Mg(2+) is bound by residues Asp190, Glu194, Glu226, and Glu230. Ser251 contacts substrate.

The protein belongs to the ketol-acid reductoisomerase family. It depends on Mg(2+) as a cofactor.

It carries out the reaction (2R)-2,3-dihydroxy-3-methylbutanoate + NADP(+) = (2S)-2-acetolactate + NADPH + H(+). It catalyses the reaction (2R,3R)-2,3-dihydroxy-3-methylpentanoate + NADP(+) = (S)-2-ethyl-2-hydroxy-3-oxobutanoate + NADPH + H(+). Its pathway is amino-acid biosynthesis; L-isoleucine biosynthesis; L-isoleucine from 2-oxobutanoate: step 2/4. It participates in amino-acid biosynthesis; L-valine biosynthesis; L-valine from pyruvate: step 2/4. Functionally, involved in the biosynthesis of branched-chain amino acids (BCAA). Catalyzes an alkyl-migration followed by a ketol-acid reduction of (S)-2-acetolactate (S2AL) to yield (R)-2,3-dihydroxy-isovalerate. In the isomerase reaction, S2AL is rearranged via a Mg-dependent methyl migration to produce 3-hydroxy-3-methyl-2-ketobutyrate (HMKB). In the reductase reaction, this 2-ketoacid undergoes a metal-dependent reduction by NADPH to yield (R)-2,3-dihydroxy-isovalerate. This is Ketol-acid reductoisomerase (NADP(+)) from Rubrobacter xylanophilus (strain DSM 9941 / JCM 11954 / NBRC 16129 / PRD-1).